Here is a 278-residue protein sequence, read N- to C-terminus: Biotin synthase (278 aa).

Residues 1 to 227 (MQIMLCAISN…QSVVMVAGGR (227 aa)) enclose the Radical SAM core domain. Positions 16, 20, and 23 each coordinate [4Fe-4S] cluster. [2Fe-2S] cluster contacts are provided by cysteine 60, cysteine 95, and cysteine 153.

Belongs to the radical SAM superfamily. Biotin synthase family. As to quaternary structure, homodimer. [4Fe-4S] cluster serves as cofactor. Requires [2Fe-2S] cluster as cofactor.

It catalyses the reaction (4R,5S)-dethiobiotin + (sulfur carrier)-SH + 2 reduced [2Fe-2S]-[ferredoxin] + 2 S-adenosyl-L-methionine = (sulfur carrier)-H + biotin + 2 5'-deoxyadenosine + 2 L-methionine + 2 oxidized [2Fe-2S]-[ferredoxin]. It functions in the pathway cofactor biosynthesis; biotin biosynthesis; biotin from 7,8-diaminononanoate: step 2/2. Functionally, catalyzes the conversion of dethiobiotin (DTB) to biotin by the insertion of a sulfur atom into dethiobiotin via a radical-based mechanism. The protein is Biotin synthase of Campylobacter jejuni subsp. jejuni serotype O:6 (strain 81116 / NCTC 11828).